A 66-amino-acid chain; its full sequence is Large ribosomal subunit protein uL29 (66 aa).

It belongs to the universal ribosomal protein uL29 family.

The protein is Large ribosomal subunit protein uL29 of Thermosipho africanus (strain TCF52B).